The sequence spans 470 residues: Uronate isomerase (470 aa).

This sequence belongs to the metallo-dependent hydrolases superfamily. Uronate isomerase family.

It catalyses the reaction D-glucuronate = D-fructuronate. The catalysed reaction is aldehydo-D-galacturonate = keto-D-tagaturonate. It functions in the pathway carbohydrate metabolism; pentose and glucuronate interconversion. This chain is Uronate isomerase, found in Shigella boydii serotype 4 (strain Sb227).